Consider the following 439-residue polypeptide: Thymidine phosphorylase (439 aa).

The protein belongs to the thymidine/pyrimidine-nucleoside phosphorylase family. As to quaternary structure, homodimer.

The enzyme catalyses thymidine + phosphate = 2-deoxy-alpha-D-ribose 1-phosphate + thymine. The protein operates within pyrimidine metabolism; dTMP biosynthesis via salvage pathway; dTMP from thymine: step 1/2. The enzymes which catalyze the reversible phosphorolysis of pyrimidine nucleosides are involved in the degradation of these compounds and in their utilization as carbon and energy sources, or in the rescue of pyrimidine bases for nucleotide synthesis. The chain is Thymidine phosphorylase from Mesorhizobium japonicum (strain LMG 29417 / CECT 9101 / MAFF 303099) (Mesorhizobium loti (strain MAFF 303099)).